We begin with the raw amino-acid sequence, 946 residues long: Bifunctional glutamine synthetase adenylyltransferase/adenylyl-removing enzyme (946 aa).

Positions 1–440 are adenylyl removase; the sequence is MKPLSSPLQQ…VFNELIGDDE (440 aa). The adenylyl transferase stretch occupies residues 449 to 946; that stretch reads SEHWRELWQD…ASWQKWLVAG (498 aa).

It belongs to the GlnE family. It depends on Mg(2+) as a cofactor.

The catalysed reaction is [glutamine synthetase]-O(4)-(5'-adenylyl)-L-tyrosine + phosphate = [glutamine synthetase]-L-tyrosine + ADP. It catalyses the reaction [glutamine synthetase]-L-tyrosine + ATP = [glutamine synthetase]-O(4)-(5'-adenylyl)-L-tyrosine + diphosphate. Its function is as follows. Involved in the regulation of glutamine synthetase GlnA, a key enzyme in the process to assimilate ammonia. When cellular nitrogen levels are high, the C-terminal adenylyl transferase (AT) inactivates GlnA by covalent transfer of an adenylyl group from ATP to specific tyrosine residue of GlnA, thus reducing its activity. Conversely, when nitrogen levels are low, the N-terminal adenylyl removase (AR) activates GlnA by removing the adenylyl group by phosphorolysis, increasing its activity. The regulatory region of GlnE binds the signal transduction protein PII (GlnB) which indicates the nitrogen status of the cell. The chain is Bifunctional glutamine synthetase adenylyltransferase/adenylyl-removing enzyme from Citrobacter koseri (strain ATCC BAA-895 / CDC 4225-83 / SGSC4696).